The sequence spans 239 residues: Ribosomal RNA small subunit methyltransferase G (239 aa).

S-adenosyl-L-methionine is bound by residues G78, F83, 129-130 (AE), and R148.

It belongs to the methyltransferase superfamily. RNA methyltransferase RsmG family.

It is found in the cytoplasm. Its function is as follows. Specifically methylates the N7 position of a guanine in 16S rRNA. The sequence is that of Ribosomal RNA small subunit methyltransferase G from Clostridium botulinum (strain ATCC 19397 / Type A).